A 78-amino-acid chain; its full sequence is Probable [Fe-S]-dependent transcriptional repressor (78 aa).

The iron-sulfur cluster site is built by Cys56, Cys61, Cys64, and Cys70.

The protein belongs to the FeoC family.

Its function is as follows. May function as a transcriptional regulator that controls feoABC expression. In Escherichia coli O7:K1 (strain IAI39 / ExPEC), this protein is Probable [Fe-S]-dependent transcriptional repressor.